Here is a 495-residue protein sequence, read N- to C-terminus: ATP synthase subunit beta, chloroplastic (495 aa).

Residue 172–179 (GGAGVGKT) participates in ATP binding.

The protein belongs to the ATPase alpha/beta chains family. F-type ATPases have 2 components, CF(1) - the catalytic core - and CF(0) - the membrane proton channel. CF(1) has five subunits: alpha(3), beta(3), gamma(1), delta(1), epsilon(1). CF(0) has four main subunits: a(1), b(1), b'(1) and c(9-12).

It is found in the plastid. The protein localises to the chloroplast thylakoid membrane. It carries out the reaction ATP + H2O + 4 H(+)(in) = ADP + phosphate + 5 H(+)(out). Its function is as follows. Produces ATP from ADP in the presence of a proton gradient across the membrane. The catalytic sites are hosted primarily by the beta subunits. The protein is ATP synthase subunit beta, chloroplastic of Convallaria majalis (Lily of the valley).